Consider the following 358-residue polypeptide: Homoserine O-acetyltransferase (358 aa).

One can recognise an AB hydrolase-1 domain in the interval 41-343 (NAVLICHALT…DYGHDAFLVD (303 aa)). The active-site Nucleophile is Ser143. Arg212 lines the substrate pocket. Active-site residues include Asp304 and His337. Asp338 contributes to the substrate binding site.

Belongs to the AB hydrolase superfamily. MetX family. As to quaternary structure, homodimer.

Its subcellular location is the cytoplasm. It catalyses the reaction L-homoserine + acetyl-CoA = O-acetyl-L-homoserine + CoA. It functions in the pathway amino-acid biosynthesis; L-methionine biosynthesis via de novo pathway; O-acetyl-L-homoserine from L-homoserine: step 1/1. In terms of biological role, transfers an acetyl group from acetyl-CoA to L-homoserine, forming acetyl-L-homoserine. This Haemophilus influenzae (strain 86-028NP) protein is Homoserine O-acetyltransferase.